We begin with the raw amino-acid sequence, 190 residues long: uncharacterized protein (190 aa).

An N-terminal signal peptide occupies residues 1 to 15 (MKVFAYIALATVVAG).

Its subcellular location is the secreted. This is an uncharacterized protein from Arthroderma benhamiae (strain ATCC MYA-4681 / CBS 112371) (Trichophyton mentagrophytes).